A 91-amino-acid polypeptide reads, in one-letter code: Putative pterin-4-alpha-carbinolamine dehydratase (91 aa).

It belongs to the pterin-4-alpha-carbinolamine dehydratase family.

The enzyme catalyses (4aS,6R)-4a-hydroxy-L-erythro-5,6,7,8-tetrahydrobiopterin = (6R)-L-erythro-6,7-dihydrobiopterin + H2O. The sequence is that of Putative pterin-4-alpha-carbinolamine dehydratase from Halobacterium salinarum (strain ATCC 29341 / DSM 671 / R1).